Here is a 473-residue protein sequence, read N- to C-terminus: P3 protein (473 aa).

9 helical membrane-spanning segments follow: residues 25 to 45 (FVGMLGTALLFISLPWGAQVM), 221 to 241 (PMLLGLLGQFLVMPFYAFLMA), 249 to 269 (ALALGLIITCSSPGGGGSYLF), 277 to 297 (VTLAISMTFISTVAATGFLPL), 316 to 336 (ISKILGTLLFIAIPIAAGVVI), 356 to 376 (FILLLGGLFLAYHMGVFILVG), 381 to 401 (IVLVGFTVPLVGLLVGYSLAI), 413 to 433 (VSIEVGVQNSLLALAMLQLSL), and 446 to 466 (FIVALSGTSEMLALVIGQFIY).

The protein belongs to the bile acid:sodium symporter (BASS) (TC 2.A.28) family.

The protein localises to the membrane. Its function is as follows. The ubiquitous expression and the conservation of the sequence in distant animal species suggest that the gene codes for a protein with housekeeping functions. The chain is P3 protein (Slc10a3) from Mus musculus (Mouse).